We begin with the raw amino-acid sequence, 290 residues long: uncharacterized protein (290 aa).

The first 25 residues, 1-25 (MNKKSILSKTSLGSLFFLFGTALSA), serve as a signal peptide directing secretion. A lipid anchor (N-palmitoyl cysteine) is attached at C26. C26 carries the S-diacylglycerol cysteine lipid modification. Residues 183–203 (GTDSKGSGSNNQNGGVTEKDF) form a disordered region. Residues 186–197 (SKGSGSNNQNGG) show a composition bias toward low complexity.

This sequence belongs to the MG439/MG440 family.

It is found in the cell membrane. This is an uncharacterized protein from Mycoplasma pneumoniae (strain ATCC 29342 / M129 / Subtype 1) (Mycoplasmoides pneumoniae).